Reading from the N-terminus, the 368-residue chain is Flavanone 3-dioxygenase (368 aa).

A Fe2OG dioxygenase domain is found at 191 to 295; it reads CVDMDQKVIV…RMSIATFQNP (105 aa). 3 residues coordinate Fe cation: His218, Asp220, and His276. Arg286 is a binding site for 2-oxoglutarate.

It belongs to the iron/ascorbate-dependent oxidoreductase family. It depends on Fe(2+) as a cofactor. Requires L-ascorbate as cofactor.

It catalyses the reaction a (2S)-flavan-4-one + 2-oxoglutarate + O2 = a (2R,3R)-dihydroflavonol + succinate + CO2. It functions in the pathway secondary metabolite biosynthesis; flavonoid biosynthesis. In terms of biological role, involved in the conversion of (2S)-naringenin to (+)-(2R/3R)-dihydrokaempferol. This is Flavanone 3-dioxygenase (FHT) from Petroselinum crispum (Parsley).